The following is a 463-amino-acid chain: MDYLPLFHKLQGGRALVVGGGEIALRKARLLADAGAALRVVAPEVDGQLAALAREGGGEVLVRGYQSSDLDGCRLVIAATDDPGLNAQVSAHAQARSLPVNVVDAPALCTVIFPAIVDRSPLVVAVSSGGDAPVLARLIRAKLEAWIPSAYGELAGLAARFRDKVKALYPDVNQRRGFWENVFQGPIAERQLAGQGAEAERLLQAMVDGAPVQQGGEVYLVGAGPGDPDLLTFRALRLMQQADVVLYDRLVAPAIIEMCRRDAERIYVGKRRADHAVPQDQINRLLVDLARQGKRVLRLKGGDPFIFGRGGEEIEELADEGIPFQVVPGITAASGCSAYGGIPLTHRDYAQSVRFVTGHLKDGTSNLPWNDLVAPAQTLVFYMGLVGLPTICAELIRHGRAASTPAALVQQGTTRNQRVFTGTLADLPELVARHEVHAPTLVIVGEVVKLRDKLAWFEGAQNS.

Residues 1-203 (MDYLPLFHKL…GQGAEAERLL (203 aa)) are precorrin-2 dehydrogenase /sirohydrochlorin ferrochelatase. Residues 22–23 (EI) and 43–44 (PE) each bind NAD(+). S128 is modified (phosphoserine). Residues 216-463 (GEVYLVGAGP…LAWFEGAQNS (248 aa)) are uroporphyrinogen-III C-methyltransferase. P225 is an S-adenosyl-L-methionine binding site. Catalysis depends on D248, which acts as the Proton acceptor. The Proton donor role is filled by K270. S-adenosyl-L-methionine is bound by residues 301-303 (GGD), I306, 331-332 (TA), M383, and G412.

It in the N-terminal section; belongs to the precorrin-2 dehydrogenase / sirohydrochlorin ferrochelatase family. The protein in the C-terminal section; belongs to the precorrin methyltransferase family.

It carries out the reaction uroporphyrinogen III + 2 S-adenosyl-L-methionine = precorrin-2 + 2 S-adenosyl-L-homocysteine + H(+). The enzyme catalyses precorrin-2 + NAD(+) = sirohydrochlorin + NADH + 2 H(+). The catalysed reaction is siroheme + 2 H(+) = sirohydrochlorin + Fe(2+). The protein operates within cofactor biosynthesis; adenosylcobalamin biosynthesis; precorrin-2 from uroporphyrinogen III: step 1/1. It functions in the pathway cofactor biosynthesis; adenosylcobalamin biosynthesis; sirohydrochlorin from precorrin-2: step 1/1. It participates in porphyrin-containing compound metabolism; siroheme biosynthesis; precorrin-2 from uroporphyrinogen III: step 1/1. Its pathway is porphyrin-containing compound metabolism; siroheme biosynthesis; siroheme from sirohydrochlorin: step 1/1. The protein operates within porphyrin-containing compound metabolism; siroheme biosynthesis; sirohydrochlorin from precorrin-2: step 1/1. In terms of biological role, multifunctional enzyme that catalyzes the SAM-dependent methylations of uroporphyrinogen III at position C-2 and C-7 to form precorrin-2 via precorrin-1. Then it catalyzes the NAD-dependent ring dehydrogenation of precorrin-2 to yield sirohydrochlorin. Finally, it catalyzes the ferrochelation of sirohydrochlorin to yield siroheme. The chain is Siroheme synthase from Pseudomonas entomophila (strain L48).